The following is a 447-amino-acid chain: Multicopper oxidase mco (447 aa).

The span at 1–25 shows a compositional bias: basic and acidic residues; that stretch reads MMNMKEDKKNTMDMKNMKHHDERKK. The disordered stretch occupies residues 1-28; sequence MMNMKEDKKNTMDMKNMKHHDERKKLNS. Residues histidine 107, histidine 109, histidine 147, histidine 149, histidine 375, histidine 378, histidine 380, histidine 428, cysteine 429, histidine 430, histidine 434, and methionine 439 each coordinate Cu cation.

It belongs to the multicopper oxidase family. It depends on Cu cation as a cofactor.

It is found in the cytoplasm. Functionally, may be involved in copper homeostasis and oxidative stress response. The chain is Multicopper oxidase mco (mco) from Staphylococcus epidermidis (strain ATCC 12228 / FDA PCI 1200).